The following is a 340-amino-acid chain: Ephrin-B3 (340 aa).

The first 27 residues, 1–27 (MGPPHSGPGGVRVGALLLLGVLGLVSG), serve as a signal peptide directing secretion. The Ephrin RBD domain maps to 28–167 (LSLEPVYWNS…TRGMKVLLRV (140 aa)). At 28–226 (LSLEPVYWNS…EGPLPPPSMP (199 aa)) the chain is on the extracellular side. 2 disulfides stabilise this stretch: Cys62/Cys104 and Cys92/Cys156. Residues 168–225 (GQSPRGGAVPRKPVSEMPMERDRGAAHSLEPGKENLPGDPTSNATSRGAEGPLPPPSM) are disordered. Residues 185–200 (PMERDRGAAHSLEPGK) show a composition bias toward basic and acidic residues. N-linked (GlcNAc...) asparagine glycosylation is present at Asn210. Residues 227–247 (AVAGAAGGLALLLLGVAGAGG) form a helical membrane-spanning segment. Topologically, residues 248–340 (AMCWRRRRAK…QSPPNIYYKV (93 aa)) are cytoplasmic. Residues 254-298 (RRAKPSESRHPGPGSFGRGGSLGLGGGGGMGPREAEPGELGIALR) form a disordered region. Gly residues predominate over residues 267–284 (GSFGRGGSLGLGGGGGMG). At Arg271 the chain carries Omega-N-methylarginine. At Ser274 the chain carries Phosphoserine. The PDZ-binding motif lies at 338–340 (YKV).

It belongs to the ephrin family. Interacts with GRIP1 and GRIP2. In terms of assembly, (Microbial infection) Interacts with nipah virus and hendra virus glycoprotein. In terms of tissue distribution, highly expressed in brain; expressed in embryonic floor plate, roof plate and hindbrain segments.

Its subcellular location is the membrane. Functionally, cell surface transmembrane ligand for Eph receptors, a family of receptor tyrosine kinases which are crucial for migration, repulsion and adhesion during neuronal, vascular and epithelial development. Binds promiscuously Eph receptors residing on adjacent cells, leading to contact-dependent bidirectional signaling into neighboring cells. The signaling pathway downstream of the receptor is referred to as forward signaling while the signaling pathway downstream of the ephrin ligand is referred to as reverse signaling. May play a pivotal role in forebrain function. Binds to, and induce the collapse of, commissural axons/growth cones in vitro. May play a role in constraining the orientation of longitudinally projecting axons. (Microbial infection) Acts as a receptor for nipah virus and hendra virus. The chain is Ephrin-B3 (EFNB3) from Homo sapiens (Human).